A 449-amino-acid chain; its full sequence is Bifunctional protein GlmU (449 aa).

A pyrophosphorylase region spans residues 1–231; sequence MVRNCLSIVL…FDNVIGINNC (231 aa). Residues 10–13, lysine 24, glutamine 77, and 82–83 contribute to the UDP-N-acetyl-alpha-D-glucosamine site; these read LAAG and GT. Aspartate 107 lines the Mg(2+) pocket. Residues glycine 143, glutamate 157, asparagine 172, and asparagine 229 each coordinate UDP-N-acetyl-alpha-D-glucosamine. Asparagine 229 contacts Mg(2+). Residues 232–252 are linker; that stretch reads FELFEADALWQKRKARDLMLS. The N-acetyltransferase stretch occupies residues 253 to 449; sequence GVTILKPESV…AHLSKNKRNK (197 aa). UDP-N-acetyl-alpha-D-glucosamine-binding residues include arginine 318 and lysine 336. Histidine 348 (proton acceptor) is an active-site residue. 2 residues coordinate UDP-N-acetyl-alpha-D-glucosamine: tyrosine 351 and asparagine 362. Acetyl-CoA is bound by residues alanine 365, 371 to 372, serine 390, serine 408, and arginine 425; that span reads NY.

The protein in the N-terminal section; belongs to the N-acetylglucosamine-1-phosphate uridyltransferase family. In the C-terminal section; belongs to the transferase hexapeptide repeat family. In terms of assembly, homotrimer. Mg(2+) is required as a cofactor.

The protein localises to the cytoplasm. The catalysed reaction is alpha-D-glucosamine 1-phosphate + acetyl-CoA = N-acetyl-alpha-D-glucosamine 1-phosphate + CoA + H(+). It catalyses the reaction N-acetyl-alpha-D-glucosamine 1-phosphate + UTP + H(+) = UDP-N-acetyl-alpha-D-glucosamine + diphosphate. It participates in nucleotide-sugar biosynthesis; UDP-N-acetyl-alpha-D-glucosamine biosynthesis; N-acetyl-alpha-D-glucosamine 1-phosphate from alpha-D-glucosamine 6-phosphate (route II): step 2/2. The protein operates within nucleotide-sugar biosynthesis; UDP-N-acetyl-alpha-D-glucosamine biosynthesis; UDP-N-acetyl-alpha-D-glucosamine from N-acetyl-alpha-D-glucosamine 1-phosphate: step 1/1. It functions in the pathway bacterial outer membrane biogenesis; LPS lipid A biosynthesis. In terms of biological role, catalyzes the last two sequential reactions in the de novo biosynthetic pathway for UDP-N-acetylglucosamine (UDP-GlcNAc). The C-terminal domain catalyzes the transfer of acetyl group from acetyl coenzyme A to glucosamine-1-phosphate (GlcN-1-P) to produce N-acetylglucosamine-1-phosphate (GlcNAc-1-P), which is converted into UDP-GlcNAc by the transfer of uridine 5-monophosphate (from uridine 5-triphosphate), a reaction catalyzed by the N-terminal domain. The polypeptide is Bifunctional protein GlmU (Bartonella bacilliformis (strain ATCC 35685 / KC583 / Herrer 020/F12,63)).